Consider the following 304-residue polypeptide: Ornithine carbamoyltransferase (304 aa).

Carbamoyl phosphate contacts are provided by residues 47–50 (STRT), Arg-98, and 125–128 (HPCQ). L-ornithine-binding positions include Asn-156, Asp-221, and 225 to 226 (SM). Carbamoyl phosphate-binding positions include 262–263 (CL) and Arg-290.

It belongs to the aspartate/ornithine carbamoyltransferase superfamily. OTCase family.

The protein resides in the cytoplasm. The catalysed reaction is carbamoyl phosphate + L-ornithine = L-citrulline + phosphate + H(+). The protein operates within amino-acid biosynthesis; L-arginine biosynthesis; L-arginine from L-ornithine and carbamoyl phosphate: step 1/3. In terms of biological role, reversibly catalyzes the transfer of the carbamoyl group from carbamoyl phosphate (CP) to the N(epsilon) atom of ornithine (ORN) to produce L-citrulline. The polypeptide is Ornithine carbamoyltransferase (Methanococcus maripaludis (strain C7 / ATCC BAA-1331)).